Consider the following 97-residue polypeptide: Large ribosomal subunit protein bL28 (97 aa).

It belongs to the bacterial ribosomal protein bL28 family.

This is Large ribosomal subunit protein bL28 from Brucella abortus (strain S19).